Consider the following 150-residue polypeptide: Large ribosomal subunit protein bL9 (150 aa).

It belongs to the bacterial ribosomal protein bL9 family.

In terms of biological role, binds to the 23S rRNA. The protein is Large ribosomal subunit protein bL9 of Stenotrophomonas maltophilia (strain R551-3).